We begin with the raw amino-acid sequence, 324 residues long: Glyoxylate/hydroxypyruvate reductase B (324 aa).

Residues Arg-237 and Glu-266 contribute to the active site. The active-site Proton donor is the His-285.

This sequence belongs to the D-isomer specific 2-hydroxyacid dehydrogenase family. GhrB subfamily. In terms of assembly, homodimer.

It is found in the cytoplasm. The catalysed reaction is glycolate + NADP(+) = glyoxylate + NADPH + H(+). It catalyses the reaction (R)-glycerate + NAD(+) = 3-hydroxypyruvate + NADH + H(+). The enzyme catalyses (R)-glycerate + NADP(+) = 3-hydroxypyruvate + NADPH + H(+). In terms of biological role, catalyzes the NADPH-dependent reduction of glyoxylate and hydroxypyruvate into glycolate and glycerate, respectively. In Salmonella paratyphi A (strain ATCC 9150 / SARB42), this protein is Glyoxylate/hydroxypyruvate reductase B.